Consider the following 438-residue polypeptide: Putative hydrolase MSMEG_3995/MSMEI_3903 (438 aa).

D95, D104, E143, and H208 together coordinate Zn(2+). Residue K217 forms an Isoglutamyl lysine isopeptide (Lys-Gln) (interchain with Q-Cter in protein Pup) linkage. H400 contributes to the Zn(2+) binding site.

This sequence belongs to the peptidase M20 family. Zn(2+) is required as a cofactor.

The polypeptide is Putative hydrolase MSMEG_3995/MSMEI_3903 (Mycolicibacterium smegmatis (strain ATCC 700084 / mc(2)155) (Mycobacterium smegmatis)).